The following is a 1074-amino-acid chain: Isoleucine--tRNA ligase (1074 aa).

Residues 50-60 (PYTSGAAHMGT) carry the 'HIGH' region motif. The short motif at 605–609 (GMSKS) is the 'KMSKS' region element. K608 provides a ligand contact to ATP.

The protein belongs to the class-I aminoacyl-tRNA synthetase family. IleS type 2 subfamily. As to quaternary structure, monomer. Zn(2+) is required as a cofactor.

The protein localises to the cytoplasm. The catalysed reaction is tRNA(Ile) + L-isoleucine + ATP = L-isoleucyl-tRNA(Ile) + AMP + diphosphate. Its function is as follows. Catalyzes the attachment of isoleucine to tRNA(Ile). As IleRS can inadvertently accommodate and process structurally similar amino acids such as valine, to avoid such errors it has two additional distinct tRNA(Ile)-dependent editing activities. One activity is designated as 'pretransfer' editing and involves the hydrolysis of activated Val-AMP. The other activity is designated 'posttransfer' editing and involves deacylation of mischarged Val-tRNA(Ile). This is Isoleucine--tRNA ligase from Haloarcula marismortui (strain ATCC 43049 / DSM 3752 / JCM 8966 / VKM B-1809) (Halobacterium marismortui).